The primary structure comprises 476 residues: Aspartyl/glutamyl-tRNA(Asn/Gln) amidotransferase subunit B (476 aa).

This sequence belongs to the GatB/GatE family. GatB subfamily. Heterotrimer of A, B and C subunits.

It carries out the reaction L-glutamyl-tRNA(Gln) + L-glutamine + ATP + H2O = L-glutaminyl-tRNA(Gln) + L-glutamate + ADP + phosphate + H(+). The enzyme catalyses L-aspartyl-tRNA(Asn) + L-glutamine + ATP + H2O = L-asparaginyl-tRNA(Asn) + L-glutamate + ADP + phosphate + 2 H(+). Its function is as follows. Allows the formation of correctly charged Asn-tRNA(Asn) or Gln-tRNA(Gln) through the transamidation of misacylated Asp-tRNA(Asn) or Glu-tRNA(Gln) in organisms which lack either or both of asparaginyl-tRNA or glutaminyl-tRNA synthetases. The reaction takes place in the presence of glutamine and ATP through an activated phospho-Asp-tRNA(Asn) or phospho-Glu-tRNA(Gln). In Clostridium kluyveri (strain ATCC 8527 / DSM 555 / NBRC 12016 / NCIMB 10680 / K1), this protein is Aspartyl/glutamyl-tRNA(Asn/Gln) amidotransferase subunit B.